Reading from the N-terminus, the 247-residue chain is NCT transcriptional regulatory complex subunit A (247 aa).

The span at 1–12 (MTDQDSTYRPRS) shows a compositional bias: basic and acidic residues. Disordered regions lie at residues 1-31 (MTDQ…SPIY), 48-82 (FFAP…SPDM), and 212-247 (VPDQ…DDSD). The span at 13-22 (PDLSTFQSSI) shows a compositional bias: polar residues.

Belongs to the NC2 alpha/DRAP1 family. As to quaternary structure, forms the NCT transcriptional regulatory complex with nctB and mot1.

It is found in the nucleus. Its function is as follows. Part of the NCT transcriptional regulatory complex that acts as a key regulator of ergosterol biosynthesis and the azole exporter cdr1B. The NCT complex binds the promoters of genes linked to azole susceptibility, and especially represses the expression of cdr1B transporter. In Aspergillus fumigatus (strain CBS 144.89 / FGSC A1163 / CEA10) (Neosartorya fumigata), this protein is NCT transcriptional regulatory complex subunit A.